We begin with the raw amino-acid sequence, 74 residues long: RNA-binding protein Hfq (74 aa).

The 61-residue stretch at 9–69 (DQFLNQLRKD…ISTFAPEKNV (61 aa)) folds into the Sm domain.

Belongs to the Hfq family. In terms of assembly, homohexamer.

In terms of biological role, RNA chaperone that binds small regulatory RNA (sRNAs) and mRNAs to facilitate mRNA translational regulation in response to envelope stress, environmental stress and changes in metabolite concentrations. Also binds with high specificity to tRNAs. The protein is RNA-binding protein Hfq of Geobacillus sp. (strain WCH70).